A 324-amino-acid chain; its full sequence is tRNA uridine(34) hydroxylase (324 aa).

Residues asparagine 145–leucine 239 form the Rhodanese domain. Cysteine 199 functions as the Cysteine persulfide intermediate in the catalytic mechanism.

This sequence belongs to the TrhO family.

It carries out the reaction uridine(34) in tRNA + AH2 + O2 = 5-hydroxyuridine(34) in tRNA + A + H2O. In terms of biological role, catalyzes oxygen-dependent 5-hydroxyuridine (ho5U) modification at position 34 in tRNAs. This Buchnera aphidicola subsp. Acyrthosiphon pisum (strain APS) (Acyrthosiphon pisum symbiotic bacterium) protein is tRNA uridine(34) hydroxylase.